Reading from the N-terminus, the 263-residue chain is MFDIGVNLTSSQFVKDHDEVVARAYAAGVNGLLLTGTNLYESQQAQRLAQHYPHCWSTAGVHPHDSSEWRADTGEAIVALAALPEVVAIGECGLDFNRNFSTPQAQEHAFEAQLRIAAELQMPVFMHCRDAHTRFLALLDPWLDKLPGAVLHCFTGTRQEMQECLERGLYIGITGWVCDERRGLALRELLPLIPTEKLLIETDAPYLLPRDLSPKPASRRNEPAYLPHILQRIAHWRGEDPQQLAAATDANAEKLFGITLKSA.

A divalent metal cation is bound by residues Glu91, His127, and His152.

It belongs to the metallo-dependent hydrolases superfamily. TatD-type hydrolase family. TatD subfamily. As to quaternary structure, monomer. Mg(2+) is required as a cofactor.

It localises to the cytoplasm. In terms of biological role, 3'-5' exonuclease that prefers single-stranded DNA and RNA. May play a role in the H(2)O(2)-induced DNA damage repair. This is 3'-5' ssDNA/RNA exonuclease TatD from Citrobacter rodentium (strain ICC168) (Citrobacter freundii biotype 4280).